Here is a 525-residue protein sequence, read N- to C-terminus: GMP synthase [glutamine-hydrolyzing] (525 aa).

The Glutamine amidotransferase type-1 domain maps to 9 to 207 (RILILDFGSQ…VRDICQCEAL (199 aa)). The active-site Nucleophile is the cysteine 86. Residues histidine 181 and glutamate 183 contribute to the active site. The GMPS ATP-PPase domain maps to 208 to 400 (WTPAKIIDDA…LGLPYDMLYR (193 aa)). An ATP-binding site is contributed by 235 to 241 (SGGVDSS).

Homodimer.

The enzyme catalyses XMP + L-glutamine + ATP + H2O = GMP + L-glutamate + AMP + diphosphate + 2 H(+). The protein operates within purine metabolism; GMP biosynthesis; GMP from XMP (L-Gln route): step 1/1. In terms of biological role, catalyzes the synthesis of GMP from XMP. This chain is GMP synthase [glutamine-hydrolyzing], found in Shigella sonnei (strain Ss046).